A 208-amino-acid polypeptide reads, in one-letter code: Thymidylate kinase (208 aa).

11–18 (GGEGAGKS) contributes to the ATP binding site.

It belongs to the thymidylate kinase family.

The catalysed reaction is dTMP + ATP = dTDP + ADP. Its function is as follows. Phosphorylation of dTMP to form dTDP in both de novo and salvage pathways of dTTP synthesis. The protein is Thymidylate kinase (tmk) of Caulobacter vibrioides (strain ATCC 19089 / CIP 103742 / CB 15) (Caulobacter crescentus).